The chain runs to 64 residues: Potassium channel toxin kappa-KTx 3.4 (64 aa).

The N-terminal stretch at 1-26 (MKSTLMTASLLILVLLSIIDYASVYA) is a signal peptide. Residues 27 to 36 (EFIDSEISLE) constitute a propeptide that is removed on maturation. Disulfide bonds link Cys-43/Cys-61 and Cys-47/Cys-57.

It belongs to the short scorpion toxin superfamily. Potassium channel inhibitor kappa-KTx family. Kappa-KTx 3 subfamily. Expressed by the venom gland.

The protein localises to the secreted. Its function is as follows. Potassium channel inhibitor (Kv). This is Potassium channel toxin kappa-KTx 3.4 from Heterometrus petersii (Asian forest scorpion).